Consider the following 78-residue polypeptide: MEDEIELKTAPADFRFPTTNQTRHCFTRYIEFHRCTTAKGEESNDCERFAKYYRALCPGEWVDKWNEQRESGTFPGPL.

One can recognise a CHCH domain in the interval threonine 22–tryptophan 65. Positions cysteine 25–cysteine 35 match the Cx9C motif motif. 2 disulfide bridges follow: cysteine 25–cysteine 57 and cysteine 35–cysteine 46. The Cx10C motif signature appears at cysteine 46 to cysteine 57.

The protein belongs to the cytochrome c oxidase subunit 6B (TC 3.D.4.8) family. As to expression, specifically expressed in roots.

It localises to the mitochondrion. Its function is as follows. This protein is one of the nuclear-coded polypeptide chains of cytochrome c oxidase, the terminal oxidase in mitochondrial electron transport. This protein may be one of the heme-binding subunits of the oxidase. The polypeptide is Cytochrome c oxidase subunit 6b-2 (COX6B-2) (Arabidopsis thaliana (Mouse-ear cress)).